A 312-amino-acid polypeptide reads, in one-letter code: Glyoxylate/hydroxypyruvate reductase A (312 aa).

The active site involves Arg227. The active-site Proton donor is the His275.

This sequence belongs to the D-isomer specific 2-hydroxyacid dehydrogenase family. GhrA subfamily.

The protein localises to the cytoplasm. The catalysed reaction is glycolate + NADP(+) = glyoxylate + NADPH + H(+). The enzyme catalyses (R)-glycerate + NAD(+) = 3-hydroxypyruvate + NADH + H(+). It carries out the reaction (R)-glycerate + NADP(+) = 3-hydroxypyruvate + NADPH + H(+). In terms of biological role, catalyzes the NADPH-dependent reduction of glyoxylate and hydroxypyruvate into glycolate and glycerate, respectively. This Salmonella paratyphi B (strain ATCC BAA-1250 / SPB7) protein is Glyoxylate/hydroxypyruvate reductase A.